The primary structure comprises 88 residues: Small ribosomal subunit protein bS20 (88 aa).

The interval 1 to 27 (MANSKSAKKRALQSEKRRQHNASRRSM) is disordered.

The protein belongs to the bacterial ribosomal protein bS20 family.

Binds directly to 16S ribosomal RNA. This is Small ribosomal subunit protein bS20 from Shewanella oneidensis (strain ATCC 700550 / JCM 31522 / CIP 106686 / LMG 19005 / NCIMB 14063 / MR-1).